The following is a 139-amino-acid chain: Flagellar basal body rod protein FlgB (139 aa).

It belongs to the flagella basal body rod proteins family. As to quaternary structure, the basal body constitutes a major portion of the flagellar organelle and consists of a number of rings mounted on a central rod. In Gram-negative bacteria, at least four rings, L, P, S and M are present, whereas Gram-positive bacteria lack the L and P rings. The rod consists of about 26 subunits of FlgG in the distal portion, and FlgB, FlgC and FlgF build up the proximal portion of the rod with about 6 subunits each. Rod assembly occurs by export via the flagellum-specific pathway of its constituent proteins and by their incorporation into the rod structure in the probable order of FlgB, FlgC, FlgF and FlgG. Another protein, FliE, also assembles onto the stable rod structure.

It is found in the bacterial flagellum basal body. In terms of biological role, structural component of flagellum, the bacterial motility apparatus. Part of the rod structure of flagellar basal body. The chain is Flagellar basal body rod protein FlgB from Proteus mirabilis.